We begin with the raw amino-acid sequence, 397 residues long: Tryptophan synthase beta chain (397 aa).

Lys-91 is subject to N6-(pyridoxal phosphate)lysine.

The protein belongs to the TrpB family. As to quaternary structure, tetramer of two alpha and two beta chains. Requires pyridoxal 5'-phosphate as cofactor.

It carries out the reaction (1S,2R)-1-C-(indol-3-yl)glycerol 3-phosphate + L-serine = D-glyceraldehyde 3-phosphate + L-tryptophan + H2O. It functions in the pathway amino-acid biosynthesis; L-tryptophan biosynthesis; L-tryptophan from chorismate: step 5/5. Its function is as follows. The beta subunit is responsible for the synthesis of L-tryptophan from indole and L-serine. In Bacillus anthracis (strain A0248), this protein is Tryptophan synthase beta chain.